Reading from the N-terminus, the 104-residue chain is Small ribosomal subunit protein uS10 (104 aa).

It belongs to the universal ribosomal protein uS10 family. Part of the 30S ribosomal subunit.

Its function is as follows. Involved in the binding of tRNA to the ribosomes. The protein is Small ribosomal subunit protein uS10 of Thermoplasma acidophilum (strain ATCC 25905 / DSM 1728 / JCM 9062 / NBRC 15155 / AMRC-C165).